A 306-amino-acid polypeptide reads, in one-letter code: Mycothiol acetyltransferase (306 aa).

N-acetyltransferase domains are found at residues 5–157 and 159–306; these read EIYE…EPAA and ITIR…HKKL. Glutamate 36 is a 1D-myo-inositol 2-(L-cysteinylamino)-2-deoxy-alpha-D-glucopyranoside binding site. 82–84 is a binding site for acetyl-CoA; it reads MLV. Residues aspartate 186, lysine 227, and glutamate 238 each coordinate 1D-myo-inositol 2-(L-cysteinylamino)-2-deoxy-alpha-D-glucopyranoside. Acetyl-CoA is bound at residue 242–244; sequence LGV. Tyrosine 276 serves as a coordination point for 1D-myo-inositol 2-(L-cysteinylamino)-2-deoxy-alpha-D-glucopyranoside. 281–286 serves as a coordination point for acetyl-CoA; that stretch reads NVRAVR.

It belongs to the acetyltransferase family. MshD subfamily. In terms of assembly, monomer.

It carries out the reaction 1D-myo-inositol 2-(L-cysteinylamino)-2-deoxy-alpha-D-glucopyranoside + acetyl-CoA = mycothiol + CoA + H(+). In terms of biological role, catalyzes the transfer of acetyl from acetyl-CoA to desacetylmycothiol (Cys-GlcN-Ins) to form mycothiol. This Stackebrandtia nassauensis (strain DSM 44728 / CIP 108903 / NRRL B-16338 / NBRC 102104 / LLR-40K-21) protein is Mycothiol acetyltransferase.